A 121-amino-acid chain; its full sequence is Small ribosomal subunit protein uS13 (121 aa).

The segment at 94-121 (GLPVRGQRTRTNARTRKGKRKTVAGKKK) is disordered.

It belongs to the universal ribosomal protein uS13 family. Part of the 30S ribosomal subunit. Forms a loose heterodimer with protein S19. Forms two bridges to the 50S subunit in the 70S ribosome.

Its function is as follows. Located at the top of the head of the 30S subunit, it contacts several helices of the 16S rRNA. In the 70S ribosome it contacts the 23S rRNA (bridge B1a) and protein L5 of the 50S subunit (bridge B1b), connecting the 2 subunits; these bridges are implicated in subunit movement. Contacts the tRNAs in the A and P-sites. This is Small ribosomal subunit protein uS13 from Treponema pallidum (strain Nichols).